The primary structure comprises 168 residues: Photosystem I assembly protein Ycf3 (168 aa).

3 TPR repeats span residues 35–68 (AFTY…EMDP), 72–105 (SYIL…NPFL), and 120–153 (GEQA…TPGN).

It belongs to the Ycf3 family.

Its subcellular location is the plastid. The protein resides in the chloroplast thylakoid membrane. In terms of biological role, essential for the assembly of the photosystem I (PSI) complex. May act as a chaperone-like factor to guide the assembly of the PSI subunits. In Plantago lanceolata (English plantain), this protein is Photosystem I assembly protein Ycf3.